A 377-amino-acid polypeptide reads, in one-letter code: MDKYKNLTRSLTREFINLNPIQRGGILPKEAKKAVYEYWDGYSVCDYCHGRLDEVTCPPIKDFLEDIAKFLNMDCARPTHGAREGKFIVMHAICKEGDYVVLDKNAHYTSYVAAERAKLNVAEVGYEEEYPTYKINLEGYKEVIDNLEDKGKNVGLILLTHVDGEYGNLNDAKKVGKIAKEKGIPFLLNCAYTVGRMPVNGKEVKADFIVASGHKSMAASAPCGILAFSEEFSDKITKTSEKFPVKEIEMLGCTSRGLPIVTLMASFPHVVERVKKWDEELKKTRYVVDELEKIGFKQLGIKPKEHDLIKFETPVLDEIAKKDKRRGFFFYDELKKRGIGGIRAGVTKEIKMSVYGLEWEQVEYVVNAIKEIVESCK.

Pyridoxal 5'-phosphate-binding positions include 82 to 83 (AR), N189, and 212 to 214 (SGH). At K215 the chain carries N6-(pyridoxal phosphate)lysine.

It belongs to the SepCysS family. As to quaternary structure, homodimer. Interacts with SepRS. Pyridoxal 5'-phosphate serves as cofactor.

It catalyses the reaction O-phospho-L-seryl-tRNA(Cys) + hydrogen sulfide + H(+) = L-cysteinyl-tRNA(Cys) + phosphate. Functionally, converts O-phospho-L-seryl-tRNA(Cys) (Sep-tRNA(Cys)) to L-cysteinyl-tRNA(Cys) (Cys-tRNA(Cys)). The polypeptide is O-phospho-L-seryl-tRNA:Cys-tRNA synthase (Methanocaldococcus jannaschii (strain ATCC 43067 / DSM 2661 / JAL-1 / JCM 10045 / NBRC 100440) (Methanococcus jannaschii)).